The sequence spans 262 residues: Calbindin (262 aa).

T2 carries the N-acetylthreonine modification. EF-hand domains are found at residues 12–47 (ISAAQFFEIWHHYDSDGNGYMDGKELQNFIQELQQA), 54–89 (DLTPEMKAFVDQYGKATDGKIGIVELAQVLPTEENF), 99–134 (KSSEDFMQTWRKYDSDHSGFIDSEELKSFLKDLLQK), 143–178 (KLTEYTEIMLRMFDANNDGKLELTELARLLPVQENF), and 187–222 (MCAKEFNKAFEMYDQDGNGYIDENELDALLKDLCEK). Ca(2+)-binding residues include D25, D27, N29, Y31, and E36. Positions 112, 114, 116, 123, 156, 158, 160, 162, 167, 200, 202, 204, 206, and 211 each coordinate Ca(2+).

The protein belongs to the calbindin family. Highly abundant in supporting cells. Also present in hair cells.

Buffers cytosolic calcium. May stimulate a membrane Ca(2+)-ATPase and a 3',5'-cyclic nucleotide phosphodiesterase. The chain is Calbindin (CALB1) from Gallus gallus (Chicken).